A 95-amino-acid polypeptide reads, in one-letter code: Aspartyl/glutamyl-tRNA(Asn/Gln) amidotransferase subunit C (95 aa).

This sequence belongs to the GatC family. As to quaternary structure, heterotrimer of A, B and C subunits.

It carries out the reaction L-glutamyl-tRNA(Gln) + L-glutamine + ATP + H2O = L-glutaminyl-tRNA(Gln) + L-glutamate + ADP + phosphate + H(+). The enzyme catalyses L-aspartyl-tRNA(Asn) + L-glutamine + ATP + H2O = L-asparaginyl-tRNA(Asn) + L-glutamate + ADP + phosphate + 2 H(+). In terms of biological role, allows the formation of correctly charged Asn-tRNA(Asn) or Gln-tRNA(Gln) through the transamidation of misacylated Asp-tRNA(Asn) or Glu-tRNA(Gln) in organisms which lack either or both of asparaginyl-tRNA or glutaminyl-tRNA synthetases. The reaction takes place in the presence of glutamine and ATP through an activated phospho-Asp-tRNA(Asn) or phospho-Glu-tRNA(Gln). The protein is Aspartyl/glutamyl-tRNA(Asn/Gln) amidotransferase subunit C of Dechloromonas aromatica (strain RCB).